Reading from the N-terminus, the 52-residue chain is Defensin D2 (52 aa).

4 disulfides stabilise this stretch: Cys8–Cys52, Cys19–Cys39, Cys25–Cys46, and Cys29–Cys48.

Distributed in the epidermal cell layer of leaves and in the subepidermal layer region of stems. Not in roots.

Its subcellular location is the secreted. It is found in the cell wall. Antimicrobial peptide. Active against Fusarium spp., Gram-positive and Gram-negative bacterial pathogens. The protein is Defensin D2 of Spinacia oleracea (Spinach).